The sequence spans 294 residues: tRNA-uridine aminocarboxypropyltransferase 1 (294 aa).

Residues 158–185 (DMQNDSSCEPSLKRPKCSQQYDKSKNEG) are disordered. The DXTW motif lies at 202-205 (DSTW).

This sequence belongs to the TDD superfamily. DTWD1 family.

Its subcellular location is the nucleus. It catalyses the reaction a uridine in tRNA + S-adenosyl-L-methionine = a 3-[(3S)-3-amino-3-carboxypropyl]uridine in tRNA + S-methyl-5'-thioadenosine + H(+). In terms of biological role, catalyzes the formation of 3-(3-amino-3-carboxypropyl)uridine (acp3U) at position 20 in the D-loop of several cytoplasmic tRNAs (acp3U(20)). In Xenopus tropicalis (Western clawed frog), this protein is tRNA-uridine aminocarboxypropyltransferase 1.